Here is a 497-residue protein sequence, read N- to C-terminus: Probable malate:quinone oxidoreductase (497 aa).

The protein belongs to the MQO family. FAD serves as cofactor.

The enzyme catalyses (S)-malate + a quinone = a quinol + oxaloacetate. The protein operates within carbohydrate metabolism; tricarboxylic acid cycle; oxaloacetate from (S)-malate (quinone route): step 1/1. This Rhodopseudomonas palustris (strain TIE-1) protein is Probable malate:quinone oxidoreductase.